Consider the following 357-residue polypeptide: Peptide chain release factor 1 (357 aa).

Gln-236 carries the N5-methylglutamine modification. The segment covering 283–309 has biased composition (basic and acidic residues); it reads ERRKKDQERANNRREQIGSGDRSERIR. Residues 283–313 form a disordered region; that stretch reads ERRKKDQERANNRREQIGSGDRSERIRTYNF.

This sequence belongs to the prokaryotic/mitochondrial release factor family. Post-translationally, methylated by PrmC. Methylation increases the termination efficiency of RF1.

The protein localises to the cytoplasm. Peptide chain release factor 1 directs the termination of translation in response to the peptide chain termination codons UAG and UAA. This is Peptide chain release factor 1 from Rickettsia bellii (strain OSU 85-389).